The chain runs to 179 residues: Large ribosomal subunit protein uL5 (179 aa).

It belongs to the universal ribosomal protein uL5 family. As to quaternary structure, part of the 50S ribosomal subunit; part of the 5S rRNA/L5/L18/L25 subcomplex. Contacts the 5S rRNA and the P site tRNA. Forms a bridge to the 30S subunit in the 70S ribosome.

Its function is as follows. This is one of the proteins that bind and probably mediate the attachment of the 5S RNA into the large ribosomal subunit, where it forms part of the central protuberance. In the 70S ribosome it contacts protein S13 of the 30S subunit (bridge B1b), connecting the 2 subunits; this bridge is implicated in subunit movement. Contacts the P site tRNA; the 5S rRNA and some of its associated proteins might help stabilize positioning of ribosome-bound tRNAs. This Pectobacterium carotovorum subsp. carotovorum (strain PC1) protein is Large ribosomal subunit protein uL5.